Consider the following 177-residue polypeptide: ATP synthase subunit delta (177 aa).

The protein belongs to the ATPase delta chain family. F-type ATPases have 2 components, F(1) - the catalytic core - and F(0) - the membrane proton channel. F(1) has five subunits: alpha(3), beta(3), gamma(1), delta(1), epsilon(1). F(0) has three main subunits: a(1), b(2) and c(10-14). The alpha and beta chains form an alternating ring which encloses part of the gamma chain. F(1) is attached to F(0) by a central stalk formed by the gamma and epsilon chains, while a peripheral stalk is formed by the delta and b chains.

The protein resides in the cell inner membrane. Functionally, f(1)F(0) ATP synthase produces ATP from ADP in the presence of a proton or sodium gradient. F-type ATPases consist of two structural domains, F(1) containing the extramembraneous catalytic core and F(0) containing the membrane proton channel, linked together by a central stalk and a peripheral stalk. During catalysis, ATP synthesis in the catalytic domain of F(1) is coupled via a rotary mechanism of the central stalk subunits to proton translocation. Its function is as follows. This protein is part of the stalk that links CF(0) to CF(1). It either transmits conformational changes from CF(0) to CF(1) or is implicated in proton conduction. The chain is ATP synthase subunit delta from Vibrio parahaemolyticus serotype O3:K6 (strain RIMD 2210633).